A 134-amino-acid chain; its full sequence is Arginine decarboxylase proenzyme (134 aa).

The Schiff-base intermediate with substrate; via pyruvic acid role is filled by S82. A Pyruvic acid (Ser); by autocatalysis modification is found at S82. H87 serves as the catalytic Proton acceptor; for processing activity. The Proton donor; for catalytic activity role is filled by C102.

This sequence belongs to the prokaryotic AdoMetDC family. Type 1 subfamily. Heterooctamer of four alpha and four beta chains arranged as a tetramer of alpha/beta heterodimers. Pyruvate is required as a cofactor. Post-translationally, is synthesized initially as an inactive proenzyme. Formation of the active enzyme involves a self-maturation process in which the active site pyruvoyl group is generated from an internal serine residue via an autocatalytic post-translational modification. Two non-identical subunits are generated from the proenzyme in this reaction, and the pyruvate is formed at the N-terminus of the alpha chain, which is derived from the carboxyl end of the proenzyme. The post-translation cleavage follows an unusual pathway, termed non-hydrolytic serinolysis, in which the side chain hydroxyl group of the serine supplies its oxygen atom to form the C-terminus of the beta chain, while the remainder of the serine residue undergoes an oxidative deamination to produce ammonia and the pyruvoyl group blocking the N-terminus of the alpha chain.

The enzyme catalyses L-arginine + H(+) = agmatine + CO2. It participates in amine and polyamine biosynthesis; agmatine biosynthesis; agmatine from L-arginine: step 1/1. With respect to regulation, highly competitively inhibited by L-argininamide and L-arginine methyl ester. Also inhibited by alpha-difluoromethylarginine. Is not stimulated by potassium chloride as observed for other decarboxylases. Its function is as follows. Specifically catalyzes the decarboxylation of L-arginine to agmatine. Is also able to decarboxylate L-canavanine, although less efficiently. Has no S-adenosylmethionine decarboxylase (AdoMetDC) activity. This chain is Arginine decarboxylase proenzyme, found in Saccharolobus solfataricus (strain ATCC 35092 / DSM 1617 / JCM 11322 / P2) (Sulfolobus solfataricus).